The following is a 60-amino-acid chain: Ribosome modulation factor (60 aa).

The protein belongs to the ribosome modulation factor family.

It is found in the cytoplasm. Functionally, during stationary phase, converts 70S ribosomes to an inactive dimeric form (100S ribosomes). The protein is Ribosome modulation factor of Kangiella koreensis (strain DSM 16069 / JCM 12317 / KCTC 12182 / SW-125).